A 439-amino-acid polypeptide reads, in one-letter code: MTAPVLIESLDQEGRGVAHAEGKVIFIEGALPGEVVTYNAYRRKPSFELAQVGQILKPAFSRVTPECHHFGICGGCSMQHMDVRTQVAAKQRVLEDNLKHIGKVAPELVLPAVYGSPWGYRYRARLSVRYVAKKGGVLVGFHEKRSSFIADMQACRIMPPRISALIMPLRKLVESLSIRERLPQIEVSLGEDVDVLVLRILEPLTAQDETLLKAFADQHHVQLFLQTGGPQTAYPFYPEDAPELSYTLPEFDVTIPFHPTEFTQVNPMVNRILVRRALNLLDPRRGERIADLFCGLGNFTLPVARRGAQVVGYEGSAALVSRARQNSQRNGLAGSTRFMEANLFEIDESWMREQGDFDKMLIDPPREGAVAVVTALEEKQLKPWRIVYVSCNPATLARDASVLVHRNGYALKAAGVINMFPHTAHVESIALFEKARRQA.

The region spanning 1-54 (MTAPVLIESLDQEGRGVAHAEGKVIFIEGALPGEVVTYNAYRRKPSFELAQVGQ) is the TRAM domain. 4 residues coordinate [4Fe-4S] cluster: C67, C73, C76, and C155. Residues Q264, F293, N298, E314, N342, and D363 each coordinate S-adenosyl-L-methionine. The Nucleophile role is filled by C391.

The protein belongs to the class I-like SAM-binding methyltransferase superfamily. RNA M5U methyltransferase family. RlmD subfamily.

The enzyme catalyses uridine(1939) in 23S rRNA + S-adenosyl-L-methionine = 5-methyluridine(1939) in 23S rRNA + S-adenosyl-L-homocysteine + H(+). Its function is as follows. Catalyzes the formation of 5-methyl-uridine at position 1939 (m5U1939) in 23S rRNA. This Nitrosospira multiformis (strain ATCC 25196 / NCIMB 11849 / C 71) protein is 23S rRNA (uracil(1939)-C(5))-methyltransferase RlmD.